Here is a 101-residue protein sequence, read N- to C-terminus: Non-histone chromosomal protein HMG-14 (101 aa).

The segment at 1–101 is disordered; the sequence is MPKRKVSSAE…EAEEKEAKSD (101 aa). S7 is subject to ADP-ribosylserine. S8 is subject to Phosphoserine. K14 bears the N6-acetyllysine mark. S21 is modified (phosphoserine). The residue at position 25 (S25) is an ADP-ribosylserine; alternate. S25 is modified (phosphoserine; alternate). N6-acetyllysine is present on K27. 2 stretches are compositionally biased toward basic and acidic residues: residues 33-51 and 70-86; these read VETKPKKAAGKDKSSDKKV and ETKEDLPAENGETKNEE. At T82 the chain carries Phosphothreonine. At K83 the chain carries N6-acetyllysine. Residues S87, S90, and S100 each carry the phosphoserine modification.

It belongs to the HMGN family. Interacts with transcriptional regulator SEHBP. Post-translationally, phosphorylation on Ser-21 and Ser-25 weakens binding to nucleosomes and increases the rate of H3 phosphorylation.

It localises to the nucleus. Functionally, binds to the inner side of the nucleosomal DNA thus altering the interaction between the DNA and the histone octamer. May be involved in the process which maintains transcribable genes in a unique chromatin conformation. Inhibits the phosphorylation of nucleosomal histones H3 and H2A by RPS6KA5/MSK1 and RPS6KA3/RSK2. The protein is Non-histone chromosomal protein HMG-14 (HMGN1) of Bos taurus (Bovine).